The primary structure comprises 206 residues: BAG family molecular chaperone regulator 1B (206 aa).

In terms of domain architecture, BAG spans 122–202 (IEAYIDELQQ…QYLSKLDSTK (81 aa)). S144 carries the post-translational modification Phosphoserine.

As to quaternary structure, binds to the ATPase domain of HSP70/HSC chaperones.

Functionally, inhibits the chaperone activity of HSP70/HSC70 by promoting substrate release. This Schizosaccharomyces pombe (strain 972 / ATCC 24843) (Fission yeast) protein is BAG family molecular chaperone regulator 1B (bag102).